The following is a 258-amino-acid chain: Snake venom serine proteinase 5 (258 aa).

Residues 1-18 form the signal peptide; it reads MVLIRVLANLLILQLSYA. Positions 19 to 24 are excised as a propeptide; sequence QKSSEL. Residues 25-249 enclose the Peptidase S1 domain; it reads VVGGDECNIN…YNDWIQSIIA (225 aa). 6 disulfide bridges follow: C31-C163, C50-C66, C98-C256, C142-C210, C174-C189, and C200-C225. N-linked (GlcNAc...) asparagine glycosylation is present at N44. Active-site charge relay system residues include H65 and D110. The active-site Charge relay system is S204.

Belongs to the peptidase S1 family. Snake venom subfamily. As to quaternary structure, monomer. Expressed by the venom gland.

Its subcellular location is the secreted. Functionally, snake venom serine protease that may act in the hemostasis system of the prey. This chain is Snake venom serine proteinase 5, found in Crotalus adamanteus (Eastern diamondback rattlesnake).